A 420-amino-acid polypeptide reads, in one-letter code: Glutamate dehydrogenase (420 aa).

Lys105 is a catalytic residue. Residue 220–226 (GYGNAGY) coordinates NAD(+).

Belongs to the Glu/Leu/Phe/Val dehydrogenases family. As to quaternary structure, homohexamer.

It localises to the cytoplasm. It carries out the reaction L-glutamate + NAD(+) + H2O = 2-oxoglutarate + NH4(+) + NADH + H(+). The enzyme catalyses L-glutamate + NADP(+) + H2O = 2-oxoglutarate + NH4(+) + NADPH + H(+). This Pyrococcus endeavori protein is Glutamate dehydrogenase (gdhA).